A 71-amino-acid polypeptide reads, in one-letter code: Glucose-repressible gene protein (71 aa).

Residues 19–71 form a disordered region; sequence TATASKEANKDVAKDSNQGVGTRLNAAGDAISDKVSENKHDAKAEAHKQGATH. A compositionally biased stretch (basic and acidic residues) spans 49–71; sequence ISDKVSENKHDAKAEAHKQGATH.

This Neurospora crassa (strain ATCC 24698 / 74-OR23-1A / CBS 708.71 / DSM 1257 / FGSC 987) protein is Glucose-repressible gene protein (grg-1).